The following is a 309-amino-acid chain: Olfactory receptor 1A2 (309 aa).

The Extracellular segment spans residues 1 to 25; it reads MKKENQSFNLDFILLGVTSQQEQNN. N-linked (GlcNAc...) asparagine glycosylation occurs at asparagine 5. A helical transmembrane segment spans residues 26-49; sequence VFFVIFLCIYPITLTGNLLIILAI. The Cytoplasmic portion of the chain corresponds to 50–57; sequence CADIRLHN. A helical membrane pass occupies residues 58-79; it reads PMYFLLANLSLVDIIFSSVTIP. At 80–100 the chain is on the extracellular side; it reads KVLANHLLGSKFISFGGCLMQ. Residues cysteine 97 and cysteine 189 are joined by a disulfide bond. Residues 101-120 traverse the membrane as a helical segment; sequence MYFMIALAKADSYTLAAMAY. Topologically, residues 121–139 are cytoplasmic; that stretch reads DRAVAISCPLHYTTIMSPR. Residues 140-158 traverse the membrane as a helical segment; it reads SCILLIAGSWVIGNTSALP. Over 159 to 195 the chain is Extracellular; that stretch reads HTLLTASLSFCGNQEVANFYCDIMPLLKLSCSDVHFN. The chain crosses the membrane as a helical span at residues 196–218; the sequence is VKMMYLGVGVFSLPLLCIIVSYV. Topologically, residues 219–235 are cytoplasmic; sequence QVFSTVFQVPSTKSLFK. The helical transmembrane segment at 236 to 258 threads the bilayer; it reads AFCTCGSHLTVVFLYYGTTMGMY. Residues 259–270 are Extracellular-facing; the sequence is FRPLTSYSPKDA. The chain crosses the membrane as a helical span at residues 271–290; that stretch reads VITVMYVAVTPALNPFIYSL. Topologically, residues 291-309 are cytoplasmic; sequence RNWDMKAALQKLFSKRISS.

This sequence belongs to the G-protein coupled receptor 1 family.

The protein resides in the cell membrane. Functionally, odorant receptor. In Homo sapiens (Human), this protein is Olfactory receptor 1A2 (OR1A2).